A 364-amino-acid chain; its full sequence is Palmitoyltransferase ZDHHC9 (364 aa).

Residues 1–35 are Cytoplasmic-facing; the sequence is MSVMVVRKKVTRKWEKLPGRNTFCCDGRVMMARQK. The chain crosses the membrane as a helical span at residues 36 to 56; sequence GIFYLTLFLILGTCTLFFAFE. Residues 57-63 lie on the Lumenal side of the membrane; sequence CRYLAVQ. A helical membrane pass occupies residues 64-84; the sequence is QSPAIPVFAAMLFLFSMATLL. At 85–183 the chain is on the cytoplasmic side; it reads RASFSDPGVI…NCVGKRNYRY (99 aa). The region spanning 139–189 is the DHHC domain; the sequence is KYCYTCKIFRPPRASHCSICDNCVERFDHHCPWVGNCVGKRNYRYFYLFIL. Cysteine 169 serves as the catalytic S-palmitoyl cysteine intermediate. Residues 184-204 traverse the membrane as a helical segment; the sequence is FYLFILSLSLLTIYVFAFNIV. Over 205–228 the chain is Lumenal; it reads YVALKSLKIGFLETLKETPGTVLE. A helical transmembrane segment spans residues 229-249; the sequence is VLICFFTLWSVVGLTGFHTFL. The Cytoplasmic segment spans residues 250–364; it reads VALNQTTNED…PPQEAAEAEK (115 aa). The disordered stretch occupies residues 303–364; sequence PLEESGSRPP…PPQEAAEAEK (62 aa). Positions 310 to 323 are enriched in polar residues; the sequence is RPPSTQETSSSLLP. A compositionally biased stretch (pro residues) spans 346-356; it reads EMPPPEPPEPP.

This sequence belongs to the DHHC palmitoyltransferase family. ERF2/ZDHHC9 subfamily. In terms of assembly, interacts with GOLGA7.

Its subcellular location is the endoplasmic reticulum membrane. The protein localises to the golgi apparatus membrane. It carries out the reaction L-cysteinyl-[protein] + hexadecanoyl-CoA = S-hexadecanoyl-L-cysteinyl-[protein] + CoA. Functionally, palmitoyltransferase that catalyzes the addition of palmitate onto various protein substrates, such as ADRB2, GSDMD, HRAS, NRAS and CGAS. The ZDHHC9-GOLGA7 complex is a palmitoyltransferase specific for HRAS and NRAS. May have a palmitoyltransferase activity toward the beta-2 adrenergic receptor/ADRB2 and therefore regulate G protein-coupled receptor signaling. Acts as a regulator of innate immunity by catalyzing palmitoylation of CGAS, thereby promoting CGAS homodimerization and cyclic GMP-AMP synthase activity. Activates pyroptosis by catalyzing palmitoylation of gasdermin-D (GSDMD), thereby promoting membrane translocation and pore formation of GSDMD. The sequence is that of Palmitoyltransferase ZDHHC9 (ZDHHC9) from Pongo abelii (Sumatran orangutan).